Reading from the N-terminus, the 437-residue chain is Protein translocase subunit SecY (437 aa).

Helical transmembrane passes span 19-39 (LFTLGIIVIYRLGAHIPAPGV), 68-88 (LLQITIFALGIMPYITASIIL), 121-141 (VALAILQGTGLVATARSGALF), 156-176 (IFTTIIMVLTMTAGTPPVMWL), 188-208 (GMSIPMFISIAATFPGALWAI), 218-238 (WIEFGTVILIGFVMVALVVFV), 274-294 (GVIPVIFASSLLYIPALIVQF), 317-337 (YIATYFVLIVFFAFFYVAISF), 378-398 (SLYLGLIALVPTMALAGFGGA), and 400-420 (QNFPFGGTSILIIVGVGLETV).

This sequence belongs to the SecY/SEC61-alpha family. Component of the Sec protein translocase complex. Heterotrimer consisting of SecY, SecE and SecG subunits. The heterotrimers can form oligomers, although 1 heterotrimer is thought to be able to translocate proteins. Interacts with the ribosome. Interacts with SecDF, and other proteins may be involved. Interacts with SecA.

It localises to the cell membrane. Its function is as follows. The central subunit of the protein translocation channel SecYEG. Consists of two halves formed by TMs 1-5 and 6-10. These two domains form a lateral gate at the front which open onto the bilayer between TMs 2 and 7, and are clamped together by SecE at the back. The channel is closed by both a pore ring composed of hydrophobic SecY resides and a short helix (helix 2A) on the extracellular side of the membrane which forms a plug. The plug probably moves laterally to allow the channel to open. The ring and the pore may move independently. The sequence is that of Protein translocase subunit SecY from Streptomyces griseus.